We begin with the raw amino-acid sequence, 264 residues long: Fibroblast growth factor 5 (264 aa).

An N-terminal signal peptide occupies residues 1–20 (MSLSLLFLIFCSHLIHSAWA). The disordered stretch occupies residues 25–81 (RLTPEGQPAPPRNPGDSSGSRGRSSATFSSSSASSPVAASPGSQGSGSEHSSFQWSP). Over residues 38 to 72 (PGDSSGSRGRSSATFSSSSASSPVAASPGSQGSGS) the composition is skewed to low complexity. Residue Asn-108 is glycosylated (N-linked (GlcNAc...) asparagine). The disordered stretch occupies residues 227 to 254 (FTVTVPEKKKPPVKPKVPLSQPRRSPSP).

This sequence belongs to the heparin-binding growth factors family. Interacts with FGFR1 and FGFR2. Affinity between fibroblast growth factors (FGFs) and their receptors is increased by heparan sulfate glycosaminoglycans that function as coreceptors.

The protein localises to the secreted. Plays an important role in the regulation of cell proliferation and cell differentiation. Required for normal regulation of the hair growth cycle. Functions as an inhibitor of hair elongation by promoting progression from anagen, the growth phase of the hair follicle, into catagen the apoptosis-induced regression phase. The polypeptide is Fibroblast growth factor 5 (Fgf5) (Mus musculus (Mouse)).